The following is a 503-amino-acid chain: Maturase K (503 aa).

This sequence belongs to the intron maturase 2 family. MatK subfamily.

It localises to the plastid. The protein localises to the chloroplast. Its function is as follows. Usually encoded in the trnK tRNA gene intron. Probably assists in splicing its own and other chloroplast group II introns. The chain is Maturase K from Rosa rugosa (Rugosa rose).